Here is a 123-residue protein sequence, read N- to C-terminus: Integration host factor subunit alpha (123 aa).

The interval 97 to 123 (NANGTASSMSSSANAAAGDKSESASGT) is disordered. Residues 102–113 (ASSMSSSANAAA) are compositionally biased toward low complexity.

The protein belongs to the bacterial histone-like protein family. As to quaternary structure, heterodimer of an alpha and a beta chain.

Its function is as follows. This protein is one of the two subunits of integration host factor, a specific DNA-binding protein that functions in genetic recombination as well as in transcriptional and translational control. In Rhodopseudomonas palustris (strain HaA2), this protein is Integration host factor subunit alpha.